Reading from the N-terminus, the 783-residue chain is DNA ligase (783 aa).

NAD(+)-binding positions include 42–46, 91–92, and glutamate 125; these read DAEYD and SL. Lysine 127 (N6-AMP-lysine intermediate) is an active-site residue. 4 residues coordinate NAD(+): arginine 148, glutamate 185, lysine 302, and lysine 326. Zn(2+) is bound by residues cysteine 421, cysteine 423, cysteine 445, and cysteine 451. The BRCT domain maps to 705 to 783; sequence KTDTAVAGKT…EDEWLELVAG (79 aa).

Belongs to the NAD-dependent DNA ligase family. LigA subfamily. Mg(2+) serves as cofactor. Requires Mn(2+) as cofactor.

The catalysed reaction is NAD(+) + (deoxyribonucleotide)n-3'-hydroxyl + 5'-phospho-(deoxyribonucleotide)m = (deoxyribonucleotide)n+m + AMP + beta-nicotinamide D-nucleotide.. Its function is as follows. DNA ligase that catalyzes the formation of phosphodiester linkages between 5'-phosphoryl and 3'-hydroxyl groups in double-stranded DNA using NAD as a coenzyme and as the energy source for the reaction. It is essential for DNA replication and repair of damaged DNA. This is DNA ligase from Caulobacter vibrioides (strain ATCC 19089 / CIP 103742 / CB 15) (Caulobacter crescentus).